Here is a 267-residue protein sequence, read N- to C-terminus: Hydroxynaphthalene reductase-like protein Arp2 (267 aa).

I25, N45, D71, and N98 together coordinate NADP(+). Residues S147 and S148 each act as proton donor in the active site. NADP(+)-binding residues include Y162, K166, V195, and T197. Residue Y162 is the Proton acceptor of the active site. Catalysis depends on K166, which acts as the Lowers pKa of active site Tyr.

This sequence belongs to the short-chain dehydrogenases/reductases (SDR) family.

In terms of biological role, hydroxynaphthalene reductase-like protein; part of the Pks2 gene cluster that mediates the formation of infectious structures (appressoria), enabling these fungi to kill insects faster. The product of the Pks2 gene cluster is different from the one of Pks1 and has still not been identified. The chain is Hydroxynaphthalene reductase-like protein Arp2 from Metarhizium acridum (strain CQMa 102).